The following is a 216-amino-acid chain: MOB kinase activator-like 1 homolog B (216 aa).

Cysteine 79, cysteine 84, histidine 161, and histidine 166 together coordinate Zn(2+).

Belongs to the MOB1/phocein family.

This is MOB kinase activator-like 1 homolog B (mobB) from Dictyostelium discoideum (Social amoeba).